The primary structure comprises 312 residues: Tumor necrosis factor receptor type 1-associated DEATH domain protein (312 aa).

The Nuclear export signal motif lies at 147 to 163 (LRDEELTELENALRNLT). Positions 166-200 (SAGGQGSDVQGTPAPLQSLAPSPPEEKPPPPQPGQ) are disordered. The 91-residue stretch at 215 to 305 (NLQDQQKFAR…SLAEDLLGLA (91 aa)) folds into the Death domain. The tract at residues 222 to 289 (FARSVGLKWR…ATLQRLVEAL (68 aa)) is interaction with KRT14 and KRT18. Positions 231–244 (RKVGRSLQRSCRAL) match the Nuclear localization signal motif.

Stimulation of TNF-alpha receptor TNFRSF1A leads to the formation of two distinct signaling complexes. Plasma membrane-bound complex I is composed of TNFRSF1A, TRADD, RIPK1, TRAF2 and BIRC2/c-IAP1 or BIRC3 which interacts with CHUCK/IKK-alpha, IKBKB/IKK-beta and IKBKG/IKK-gamma promoting cell survival. Subsequently, TRADD, RIPK1 and TRAF2 dissociate from TNFRSF1A and form cytoplasmic complex II with FADD and caspase CASP8 promoting cell apoptosis. Within complex I, interacts with TNFRSF1A/TNFR1, TRAF2 and kinase RIPK1. Within complex I, interacts with TRPC4AP; the interaction promotes NF-kappa B activation. UXT1 associates with complex I; the interaction prevents the formation of complex II. Within complex I Interacts with scaffold protein DAB2IP. Interacts with autophagy receptor SQSTM1. Interacts with E3 ligase TRIP12. Interacts with kinase HIPK2. Interacts with keratin KRT14. Interacts with keratin KRT18. Interacts with keratins KRT16 and KRT17. Interacts with FADD. Interacts with TOMM70. Interacts with TMC8; the interaction impairs the formation of complex I and facilites complex II formation.

It is found in the nucleus. Its subcellular location is the cytoplasm. It localises to the cytoskeleton. Its function is as follows. Adapter molecule for TNFRSF1A/TNFR1 that specifically associates with the cytoplasmic domain of activated TNFRSF1A/TNFR1 mediating its interaction with FADD. Overexpression of TRADD leads to two major TNF-induced responses, apoptosis and activation of NF-kappa-B. The nuclear form acts as a tumor suppressor by preventing ubiquitination and degradation of isoform p19ARF/ARF of CDKN2A by TRIP12: acts by interacting with TRIP12, leading to disrupt interaction between TRIP12 and isoform p19ARF/ARF of CDKN2A. This is Tumor necrosis factor receptor type 1-associated DEATH domain protein from Bos taurus (Bovine).